The chain runs to 488 residues: MFKRSVIAMACIFALSACGGGGGGSPDVKSADTLSKPAAPVVSEKETEAKEDAPQAGSQGQGAPSAQGSQDMAAVSEENTGNGGAVTADNPKNEDEVAQNDMPQNAAGTDSSTPNHTPDPNMLAGNMENQATDAGESSQPANQPDMANAADGMQGDDPSAGGQNAGNTAAQGANQAGNNQAAGSSDPIPASNPAPANGGSNFGRVDLANGVLIDGPSQNITLTHCKGDSCSGNNFLDEEVQLKSEFEKLSDADKISNYKKDGKNDKFVGLVADSVQMKGINQYIIFYKPKPTSFARFRRSARSRRSLPAEMPLIPVNQADTLIVDGEAVSLTGHSGNIFAPEGNYRYLTYGAEKLPGGSYALRVQGEPAKGEMLAGAAVYNGEVLHFHTENGRPYPTRGRFAAKVDFGSKSVDGIIDSGDDLHMGTQKFKAAIDGNGFKGTWTENGSGDVSGKFYGPAGEEVAGKYSYRPTDAEKGGFGVFAGKKEQD.

The first 17 residues, 1–17 (MFKRSVIAMACIFALSA), serve as a signal peptide directing secretion. A lipid anchor (N-palmitoyl cysteine) is attached at Cys18. Cys18 carries the S-diacylglycerol cysteine lipid modification. The tract at residues 21 to 201 (GGGGSPDVKS…NPAPANGGSN (181 aa)) is disordered. Basic and acidic residues predominate over residues 43–53 (SEKETEAKEDA). Positions 54–70 (PQAGSQGQGAPSAQGSQ) are enriched in low complexity. Composition is skewed to polar residues over residues 101 to 118 (DMPQ…NHTP) and 127 to 142 (MENQ…QPAN). Low complexity predominate over residues 160–183 (AGGQNAGNTAAQGANQAGNNQAAG). Positions 296-306 (RFRRSARSRRS) match the Arg-rich motif motif. Positions 306 to 488 (SLPAEMPLIP…GVFAGKKEQD (183 aa)) are C1 fragment.

The protein belongs to the NHBA family. In terms of assembly, the C-terminal beta-barrel forms a monomer. In terms of processing, cleaved in vivo by the Neisserial phase-variable autotransporter/serine protease NalP to give 2 fragments. The N-terminus remains in the cell outer membrane while the 22 kDa C-terminus (beginning on Ser-293) is soluble; this soluble fragment is called C2. Cleaved in vitro by human lactoferrin (LTF, between Arg-305 and Ser-306), this fragment is called C1. Cleavage by NalP or lactoferrin does not alter killing of Neisseria by bactericidal antibodies in vitro. Recombinant and cell surface protein is cleaved by human saliva kallikrein (KLK1) between Ser-303 and Arg-304; in saliva kallikrein is more active on NHBA than lactoferrin. Human plasma kallikrein (KLKB1) cleaves in a similar manner to KLK1.

The protein resides in the cell outer membrane. It localises to the cell surface. It is found in the host mitochondrion. Functionally, a major human immunogenic protein detected in patients recovering from meningitidis, where it induces bactericidal antibodies. Binds heparin and heparan sulfate proteoglycan in vitro via the Arg-rich motif. Heparin-binding to this protein protects bacteria against killing by bactericidal antibodies (serum killing). Binds to human cells via the Arg-rich region; binding may require the intact protein as protein fragments do not bind to human cells. Protein binding to human cells is abolished by treatment with heparinase III but not chondroitinase ABC. The bacteria binds a number of human extracellular sialyated and/or sulfated glycans via this protein, including chondroitin sulfate (KD=5.2 nM), heparin (KD=52 nM) and ganglioside GT3 (KD=210 nM). The recombinant protein binds DNA non-specifically. Its function is as follows. Plays a role in extracellular-DNA (eDNA) mediated biofilm formation. In strain MC58 eDNA stimulates biofilm formation. When NHBA is not processed by NalP there is an increase in positively charged, NHBA- and IgA-derived DNA-binding peptides on the cell surface, resulting in increased DNA-binding peptides and increased biofilm formation. In terms of biological role, [C2 fragment] Localizes to host mitochondria when applied to the apical side of human endothelial cell layers, where it induces production of reactive oxygen species which lead to increased permeability of host endothelial cells. The C1 fragment (which lacks the first 14 residues of C2) does not have this effect. It is not known if this occurs during Neisseria infections. This is Neisserial heparin binding antigen from Neisseria meningitidis serogroup B (strain ATCC BAA-335 / MC58).